The primary structure comprises 200 residues: GGPAAYSTYTNTADFGAVGATLESTSKGLGGLNTITQFSKAVDSPTSSVRISNSRVSNDYGSLGYGALPAPAGLAYGAAGASYGASLHGAGAYGVVRAAPAIAAAPALAYGARAIAAPAIAAPALAYGARAIAAPALAYGRGLAYGGAYGAALAAPALAYGARAYAAPALALGARAYAAPAIAAAPALAYGARAYAAPAI.

10 tandem repeats follow at residues 98–101 (AAPA), 104–107 (AAPA), 116–119 (AAPA), 121–124 (AAPA), 133–136 (AAPA), 154–157 (AAPA), 166–169 (AAPA), 178–181 (AAPA), 184–187 (AAPA), and 196–199 (AAPA).

Its function is as follows. Component of the cuticle of migratory locust which contains more than 100 different structural proteins. This chain is Cuticle protein 21.3, found in Locusta migratoria (Migratory locust).